The following is a 344-amino-acid chain: Phosphoribosylformylglycinamidine cyclo-ligase (344 aa).

Belongs to the AIR synthase family.

Its subcellular location is the cytoplasm. The enzyme catalyses 2-formamido-N(1)-(5-O-phospho-beta-D-ribosyl)acetamidine + ATP = 5-amino-1-(5-phospho-beta-D-ribosyl)imidazole + ADP + phosphate + H(+). The protein operates within purine metabolism; IMP biosynthesis via de novo pathway; 5-amino-1-(5-phospho-D-ribosyl)imidazole from N(2)-formyl-N(1)-(5-phospho-D-ribosyl)glycinamide: step 2/2. The chain is Phosphoribosylformylglycinamidine cyclo-ligase from Laribacter hongkongensis (strain HLHK9).